Consider the following 230-residue polypeptide: Large ribosomal subunit protein uL1c (230 aa).

It belongs to the universal ribosomal protein uL1 family. Part of the 50S ribosomal subunit.

It is found in the plastid. Its subcellular location is the chloroplast. Functionally, binds directly to 23S rRNA. Might be involved in E site tRNA release (Potential). This is Large ribosomal subunit protein uL1c (rpl1) from Thalassiosira pseudonana (Marine diatom).